The primary structure comprises 156 residues: Pre-mRNA-splicing factor SNT309 (156 aa).

Associated with the spliceosome.

The protein localises to the nucleus. In terms of biological role, involved in pre-mRNA splicing. The chain is Pre-mRNA-splicing factor SNT309 (SNT309) from Candida glabrata (strain ATCC 2001 / BCRC 20586 / JCM 3761 / NBRC 0622 / NRRL Y-65 / CBS 138) (Yeast).